The chain runs to 695 residues: MTEIPAKQITDNDILKDVYKSQNKQFSIDAIDILDLEELKDVQRRKRTEFEGYLKRNRLDVKQWMRYAVFEIEQHDMRRARSIFERALRVHISYVPLWIRYIESELKLGYINHARNILERAITKLPRVDKLWYKYLIVEESLAHFDIVRNLFQKWCSLEPAAHVWDSFTDFEVRQERYEDVRNIYSKYVLIHPQFSTWRKWINFEVRYGSTKTVRSVYSLALDALIAYSESRNELVDDCINLIVEFSKWEALQKEYIRSKSLLEIAIQKWPKSNTLNNALLQFEREHGTAETLENTIILNRKKHYEDILNEKVYDYDTWLLYLQLLENNYPKLVMEAFSNVLNAAIPTSRTKDKYWKQYILIWIKYLTFLELTINDIPLCGQKFEELIHNIIPNDDFTFSKIWILYAEFEIRQDNLEKARSILGRSLGLCPKRKTFKYYIDLETKLREFDRVRILYENFLKFDPLNLDTWRAYVEFEDSLGDEVRVRSVCMIPIQNNIGLFSKSFQLHLLEILIDYEMEYQNFDNIEPLLKKQVELSNFTVEAWTDYAMKKLTVPTEEQVQNFQIMKEERLKDSSALDEQEIEFEFEITDNNKDNARDVFERALNYFKEIKRDEDRARILQSYVDFEGQYGDISSRQRIEKRLPSIVNGIKDIDGLKTQNITYTFPDDENKSNIDTSNILALAHKWKESQEAKSR.

HAT repeat units follow at residues 41–73, 75–107, 109–141, 143–174, 176–207, 296–328, 333–365, 375–412, 414–445, 447–479, 521–553, and 591–629; these read DVQRRKRTEFEGYLKRNRLDVKQWMRYAVFEIE, HDMRRARSIFERALRVHISYVPLWIRYIESELK, GYINHARNILERAITKLPRVDKLWYKYLIVEES, AHFDIVRNLFQKWCSLEPAAHVWDSFTDFEVR, ERYEDVRNIYSKYVLIHPQFSTWRKWINFEVR, TIILNRKKHYEDILNEKVYDYDTWLLYLQLLEN, LVMEAFSNVLNAAIPTSRTKDKYWKQYILIWIK, NDIPLCGQKFEELIHNIIPNDDFTFSKIWILYAEFEIR, DNLEKARSILGRSLGLCPKRKTFKYYIDLETK, REFDRVRILYENFLKFDPLNLDTWRAYVEFEDS, QNFDNIEPLLKKQVELSNFTVEAWTDYAMKKLT, and NNKDNARDVFERALNYFKEIKRDEDRARILQSYVDFEGQ.

The protein belongs to the crooked-neck family. As to quaternary structure, associated with the spliceosome.

It is found in the nucleus. Involved in pre-mRNA splicing and cell cycle progression. Required for the spliceosome assembly and initiation of the DNA replication. In Candida glabrata (strain ATCC 2001 / BCRC 20586 / JCM 3761 / NBRC 0622 / NRRL Y-65 / CBS 138) (Yeast), this protein is Pre-mRNA-splicing factor CLF1 (CLF1).